A 484-amino-acid chain; its full sequence is Cobyric acid synthase (484 aa).

Positions 246–437 (ALRVVVPALP…VHGLFDTPAA (192 aa)) constitute a GATase cobBQ-type domain. Residue C327 is the Nucleophile of the active site. H429 is a catalytic residue.

The protein belongs to the CobB/CobQ family. CobQ subfamily.

It participates in cofactor biosynthesis; adenosylcobalamin biosynthesis. Its function is as follows. Catalyzes amidations at positions B, D, E, and G on adenosylcobyrinic A,C-diamide. NH(2) groups are provided by glutamine, and one molecule of ATP is hydrogenolyzed for each amidation. This Paraburkholderia phymatum (strain DSM 17167 / CIP 108236 / LMG 21445 / STM815) (Burkholderia phymatum) protein is Cobyric acid synthase.